The primary structure comprises 798 residues: Ubiquitin carboxyl-terminal hydrolase 10 (798 aa).

An N-acetylalanine modification is found at Ala2. An interaction with p53/TP53 region spans residues 2 to 100 (ALHSPQYIFG…ILGCTASKIT (99 aa)). Residues 6 to 21 (PQYIFGDFSPDEFNQF) are G3BP1-binding. Position 24 is a phosphothreonine (Thr24). A Phosphothreonine; by ATM modification is found at Thr42. Thr100 bears the Phosphothreonine mark. Disordered regions lie at residues 139 to 166 (GVSG…LKDG), 194 to 257 (AEFM…CFPA), and 307 to 337 (TESI…LPVS). A compositionally biased stretch (polar residues) spans 205 to 219 (TPRTCNSPQNSTDSV). Ser211 and Ser226 each carry phosphoserine. Over residues 307–316 (TESIDLDPTK) the composition is skewed to basic and acidic residues. Phosphoserine is present on Ser321. Residues 328 to 337 (GSASGTLPVS) show a composition bias toward polar residues. Ser337 bears the Phosphoserine; by ATM mark. Ser365 and Ser370 each carry phosphoserine. The region spanning 415 to 795 (RGLINKGNWC…TAYLLYYRRV (381 aa)) is the USP domain. The active-site Nucleophile is the Cys424. Ser547 carries the post-translational modification Phosphoserine. Over residues 551 to 562 (EKLTISNGPKNH) the composition is skewed to polar residues. Positions 551–594 (EKLTISNGPKNHSVNEEEQEEQGEGSEDEWEQVGPRNKTSVTRQ) are disordered. Phosphoserine is present on residues Ser563 and Ser576. The segment covering 566–581 (EEEQEEQGEGSEDEWE) has biased composition (acidic residues). His749 functions as the Proton acceptor in the catalytic mechanism.

This sequence belongs to the peptidase C19 family. USP10 subfamily. Found in a deubiquitination complex with TANK, USP10 and ZC3H12A; this complex inhibits genotoxic stress- or interleukin-1-beta (IL1B)-mediated NF-kappa-B activation by promoting IKBKG or TRAF6 deubiquitination. Interacts with IKBKG; this interaction increases in response to DNA damage. Interacts with TANK; this interaction increases in response to DNA damage. Interacts with TRAF6; this interaction increases in response to DNA damage. Interacts with ZC3H12A; this interaction increases in response to DNA damage. Interacts with G3BP1 (via NTF2 domain) and G3BP2 (via NTF2 domain); inhibiting stress granule formation. In terms of processing, phosphorylated by ATM following DNA damage, leading to stabilization and translocation it to the nucleus. Post-translationally, ubiquitinated. Deubiquitinated by USP13. In terms of tissue distribution, widely expressed.

The protein localises to the cytoplasm. It is found in the nucleus. Its subcellular location is the early endosome. The enzyme catalyses Thiol-dependent hydrolysis of ester, thioester, amide, peptide and isopeptide bonds formed by the C-terminal Gly of ubiquitin (a 76-residue protein attached to proteins as an intracellular targeting signal).. Specifically inhibited by spautin-1 (specific and potent autophagy inhibitor-1), a derivative of MBCQ that binds to USP10 and inhibits deubiquitinase activity. Regulated by PIK3C3/VPS34-containing complexes. In terms of biological role, hydrolase that can remove conjugated ubiquitin from target proteins such as p53/TP53, RPS2/us5, RPS3/us3, RPS10/eS10, BECN1, SNX3 and CFTR. Acts as an essential regulator of p53/TP53 stability: in unstressed cells, specifically deubiquitinates p53/TP53 in the cytoplasm, leading to counteract MDM2 action and stabilize p53/TP53. Following DNA damage, translocates to the nucleus and deubiquitinates p53/TP53, leading to regulate the p53/TP53-dependent DNA damage response. Component of a regulatory loop that controls autophagy and p53/TP53 levels: mediates deubiquitination of BECN1, a key regulator of autophagy, leading to stabilize the PIK3C3/VPS34-containing complexes. In turn, PIK3C3/VPS34-containing complexes regulate USP10 stability, suggesting the existence of a regulatory system by which PIK3C3/VPS34-containing complexes regulate p53/TP53 protein levels via USP10 and USP13. Does not deubiquitinate MDM2. Plays a key role in 40S ribosome subunit recycling when a ribosome has stalled during translation: acts both by inhibiting formation of stress granules, which store stalled translation pre-initiation complexes, and mediating deubiquitination of 40S ribosome subunits. Acts as a negative regulator of stress granules formation by lowering G3BP1 and G3BP2 valence, thereby preventing G3BP1 and G3BP2 ability to undergo liquid-liquid phase separation (LLPS) and assembly of stress granules. Promotes 40S ribosome subunit recycling following ribosome dissociation in response to ribosome stalling by mediating deubiquitination of 40S ribosomal proteins RPS2/us5, RPS3/us3 and RPS10/eS10, thereby preventing their degradation by the proteasome. Part of a ribosome quality control that takes place when ribosomes have stalled during translation initiation (iRQC): USP10 acts by removing monoubiquitination of RPS2/us5 and RPS3/us3, promoting 40S ribosomal subunit recycling. Deubiquitinates CFTR in early endosomes, enhancing its endocytic recycling. Involved in a TANK-dependent negative feedback response to attenuate NF-kappa-B activation via deubiquitinating IKBKG or TRAF6 in response to interleukin-1-beta (IL1B) stimulation or upon DNA damage. Deubiquitinates TBX21 leading to its stabilization. Plays a negative role in the RLR signaling pathway upon RNA virus infection by blocking the RIGI-mediated MAVS activation. Mechanistically, removes the unanchored 'Lys-63'-linked polyubiquitin chains of MAVS to inhibit its aggregation, essential for its activation. This is Ubiquitin carboxyl-terminal hydrolase 10 from Homo sapiens (Human).